Consider the following 289-residue polypeptide: Probable protein phosphatase 2C 39 (289 aa).

The region spanning 41–288 (THGFHLVKGK…DDISVVVVKF (248 aa)) is the PPM-type phosphatase domain. Asp78, Gly79, Asp240, and Asp279 together coordinate Mn(2+).

Belongs to the PP2C family. Mg(2+) serves as cofactor. Mn(2+) is required as a cofactor.

The catalysed reaction is O-phospho-L-seryl-[protein] + H2O = L-seryl-[protein] + phosphate. It carries out the reaction O-phospho-L-threonyl-[protein] + H2O = L-threonyl-[protein] + phosphate. The sequence is that of Probable protein phosphatase 2C 39 from Arabidopsis thaliana (Mouse-ear cress).